A 186-amino-acid polypeptide reads, in one-letter code: UPF0301 protein Mmc1_0726 (186 aa).

The protein belongs to the UPF0301 (AlgH) family.

This is UPF0301 protein Mmc1_0726 from Magnetococcus marinus (strain ATCC BAA-1437 / JCM 17883 / MC-1).